The following is a 283-amino-acid chain: uncharacterized protein (283 aa).

Positions 3-79 (TGGLAIIQSM…MRVAGDLAKP (77 aa)) constitute an HTH rpiR-type domain. A DNA-binding region (H-T-H motif) is located at residues 39–58 (VNEISALANSSDAAVIRLCK). The SIS domain occupies 123–264 (AVSLLLKAHT…FLGMAAEQYE (142 aa)).

This is an uncharacterized protein from Bacillus subtilis (strain 168).